The chain runs to 209 residues: Ribose 1,5-bisphosphate phosphokinase PhnN (209 aa).

27–34 (GPSGGGKD) contacts ATP.

This sequence belongs to the ribose 1,5-bisphosphokinase family.

It carries out the reaction alpha-D-ribose 1,5-bisphosphate + ATP = 5-phospho-alpha-D-ribose 1-diphosphate + ADP. The protein operates within metabolic intermediate biosynthesis; 5-phospho-alpha-D-ribose 1-diphosphate biosynthesis; 5-phospho-alpha-D-ribose 1-diphosphate from D-ribose 5-phosphate (route II): step 3/3. In terms of biological role, catalyzes the phosphorylation of ribose 1,5-bisphosphate to 5-phospho-D-ribosyl alpha-1-diphosphate (PRPP). This Chelativorans sp. (strain BNC1) protein is Ribose 1,5-bisphosphate phosphokinase PhnN.